Consider the following 191-residue polypeptide: Rho-related GTP-binding protein RhoH (191 aa).

11–18 (GDSAVGKT) is a GTP binding site. The short motif at 33 to 41 (YKPTVYENT) is the Effector region element. Residue 58–62 (DTAGN) coordinates GTP. Residues 73 to 86 (YQQADVVLMCYSVA) are interaction with ZAP70. 116–119 (TQTD) lines the GTP pocket. Residue cysteine 188 is modified to Cysteine methyl ester. Cysteine 188 carries the S-geranylgeranyl cysteine lipid modification. Positions 189–191 (KIF) are cleaved as a propeptide — removed in mature form.

This sequence belongs to the small GTPase superfamily. Rho family. In terms of assembly, interacts with GDI1 and GDI2. Interacts with ZAP70 (via SH2 domains) and the interaction is enhanced by its phosphorylation by LCK. Interacts with SYK and the interaction is enhanced by its phosphorylation by FYN. Post-translationally, phosphorylated on tyrosine by LCK. Phosphorylated by FYN. Phosphorylation enhances the interactions with ZAP70 and SYK and is critical for its function in thymocyte development. As to expression, expression is widespread in hematopoietic cells, including in bone marrow progenitor cells and in differentiated myeloid as well as lymphoid cells. Expressed at high levels in the thymus and mast cells, found in spleen and low-density bone marrow (LDBM) cells and is detected at a low level in neutrophils. In the thymus it is detected in thymocytes of the thymic cortex but not in non-lymphoid cells of fibrovascular and fibroadipose tissues. Expressed in T-cells, B-cells and mast cells.

It is found in the cytoplasm. The protein localises to the cell membrane. Functionally, binds GTP but lacks intrinsic GTPase activity and is resistant to Rho-specific GTPase-activating proteins. Inhibits the activation of NF-kappa-B by TNF and IKKB and the activation of CRK/p38 by TNF. Inhibits activities of RAC1, RHOA and CDC42. Negatively regulates leukotriene production in neutrophils. Negative regulator of hematopoietic progenitor cell proliferation, survival and migration. Critical regulator of thymocyte development and T-cell antigen receptor (TCR) signaling by mediating recruitment and activation of ZAP70. Required for phosphorylation of CD3Z, membrane translocation of ZAP70 and subsequent activation of the ZAP70-mediated pathways. Essential for efficient beta-selection and positive selection by promoting the ZAP70-dependent phosphorylation of the LAT signalosome during pre-TCR and TCR signaling. Crucial for thymocyte maturation during DN3 to DN4 transition and during positive selection. Plays critical roles in mast cell function by facilitating phosphorylation of SYK in Fc epsilon RI-mediated signal transduction. Essential for the phosphorylation of LAT, LCP2, PLCG1 and PLCG2 and for Ca(2+) mobilization in mast cells. The sequence is that of Rho-related GTP-binding protein RhoH (Rhoh) from Mus musculus (Mouse).